The chain runs to 758 residues: Thiosulfate reductase molybdopterin-containing subunit PhsA (758 aa).

Positions 1–30 form a signal peptide, tat-type signal; that stretch reads MSISRRSFLQGVGIGCSACALGAFPPGALA. In terms of domain architecture, 4Fe-4S Mo/W bis-MGD-type spans 41–97; the sequence is TTLTPSLCEMCSFRCPIQAQVVNNKTVFIQGNPSAPQQGTRICARGGSGVSLVNDPQ. [4Fe-4S] cluster is bound by residues Cys48, Cys51, Cys55, and Cys83.

Belongs to the prokaryotic molybdopterin-containing oxidoreductase family. As to quaternary structure, composed of three subunits: PhsA, PhsB and PhsC. Requires [4Fe-4S] cluster as cofactor. Mo-bis(molybdopterin guanine dinucleotide) serves as cofactor. In terms of processing, predicted to be exported by the Tat system. The position of the signal peptide cleavage has not been experimentally proven.

The protein resides in the periplasm. The catalysed reaction is a quinone + hydrogen sulfide + sulfite + 2 H(+) = thiosulfate + a quinol. Its function is as follows. Component of the PhsABC thiosulfate reductase that catalyzes the reduction of thiosulfate to sulfite and hydrogen sulfide, with menaquinol as the sole electron donor. Proton motive force (PMF) is required to drive transmembrane electron transfer within the reductase. The PhsA subunit contains the active site molybdenum-bis(molybdopterin guanine dinucleotide) (Mo-bis-MGD) cofactor. The protein is Thiosulfate reductase molybdopterin-containing subunit PhsA of Salmonella typhimurium (strain LT2 / SGSC1412 / ATCC 700720).